We begin with the raw amino-acid sequence, 163 residues long: Crossover junction endodeoxyribonuclease RuvC (163 aa).

Active-site residues include aspartate 8, glutamate 68, and aspartate 140. 3 residues coordinate Mg(2+): aspartate 8, glutamate 68, and aspartate 140.

The protein belongs to the RuvC family. In terms of assembly, homodimer which binds Holliday junction (HJ) DNA. The HJ becomes 2-fold symmetrical on binding to RuvC with unstacked arms; it has a different conformation from HJ DNA in complex with RuvA. In the full resolvosome a probable DNA-RuvA(4)-RuvB(12)-RuvC(2) complex forms which resolves the HJ. The cofactor is Mg(2+).

It localises to the cytoplasm. It carries out the reaction Endonucleolytic cleavage at a junction such as a reciprocal single-stranded crossover between two homologous DNA duplexes (Holliday junction).. In terms of biological role, the RuvA-RuvB-RuvC complex processes Holliday junction (HJ) DNA during genetic recombination and DNA repair. Endonuclease that resolves HJ intermediates. Cleaves cruciform DNA by making single-stranded nicks across the HJ at symmetrical positions within the homologous arms, yielding a 5'-phosphate and a 3'-hydroxyl group; requires a central core of homology in the junction. The consensus cleavage sequence is 5'-(A/T)TT(C/G)-3'. Cleavage occurs on the 3'-side of the TT dinucleotide at the point of strand exchange. HJ branch migration catalyzed by RuvA-RuvB allows RuvC to scan DNA until it finds its consensus sequence, where it cleaves and resolves the cruciform DNA. This Erythrobacter litoralis (strain HTCC2594) protein is Crossover junction endodeoxyribonuclease RuvC.